A 225-amino-acid chain; its full sequence is ATP phosphoribosyltransferase (225 aa).

This sequence belongs to the ATP phosphoribosyltransferase family. Short subfamily. In terms of assembly, heteromultimer composed of HisG and HisZ subunits.

It is found in the cytoplasm. It catalyses the reaction 1-(5-phospho-beta-D-ribosyl)-ATP + diphosphate = 5-phospho-alpha-D-ribose 1-diphosphate + ATP. Its pathway is amino-acid biosynthesis; L-histidine biosynthesis; L-histidine from 5-phospho-alpha-D-ribose 1-diphosphate: step 1/9. Catalyzes the condensation of ATP and 5-phosphoribose 1-diphosphate to form N'-(5'-phosphoribosyl)-ATP (PR-ATP). Has a crucial role in the pathway because the rate of histidine biosynthesis seems to be controlled primarily by regulation of HisG enzymatic activity. The sequence is that of ATP phosphoribosyltransferase from Herminiimonas arsenicoxydans.